Consider the following 339-residue polypeptide: Methionine import ATP-binding protein MetN 2 (339 aa).

Residues 2–241 (ISFNNVSKLY…PKTKTTQNFV (240 aa)) enclose the ABC transporter domain. 38–45 (GFSGAGKS) provides a ligand contact to ATP.

The protein belongs to the ABC transporter superfamily. Methionine importer (TC 3.A.1.24) family. As to quaternary structure, the complex is composed of two ATP-binding proteins (MetN), two transmembrane proteins (MetI) and a solute-binding protein (MetQ).

It localises to the cell membrane. It catalyses the reaction L-methionine(out) + ATP + H2O = L-methionine(in) + ADP + phosphate + H(+). The catalysed reaction is D-methionine(out) + ATP + H2O = D-methionine(in) + ADP + phosphate + H(+). In terms of biological role, part of the ABC transporter complex MetNIQ involved in methionine import. Responsible for energy coupling to the transport system. This is Methionine import ATP-binding protein MetN 2 from Bacillus cereus (strain ATCC 14579 / DSM 31 / CCUG 7414 / JCM 2152 / NBRC 15305 / NCIMB 9373 / NCTC 2599 / NRRL B-3711).